We begin with the raw amino-acid sequence, 484 residues long: ATP synthase subunit beta (484 aa).

An ATP-binding site is contributed by 169 to 176 (GGAGVGKT).

This sequence belongs to the ATPase alpha/beta chains family. As to quaternary structure, F-type ATPases have 2 components, CF(1) - the catalytic core - and CF(0) - the membrane proton channel. CF(1) has five subunits: alpha(3), beta(3), gamma(1), delta(1), epsilon(1). CF(0) has three main subunits: a(1), b(2) and c(9-12). The alpha and beta chains form an alternating ring which encloses part of the gamma chain. CF(1) is attached to CF(0) by a central stalk formed by the gamma and epsilon chains, while a peripheral stalk is formed by the delta and b chains.

It is found in the cell membrane. It carries out the reaction ATP + H2O + 4 H(+)(in) = ADP + phosphate + 5 H(+)(out). In terms of biological role, produces ATP from ADP in the presence of a proton gradient across the membrane. The catalytic sites are hosted primarily by the beta subunits. This is ATP synthase subunit beta from Nocardioides sp. (strain ATCC BAA-499 / JS614).